The chain runs to 539 residues: GMP synthase [glutamine-hydrolyzing] (539 aa).

The Glutamine amidotransferase type-1 domain maps to 4–202; that stretch reads KILILDFGSQ…VLQIAGAKPD (199 aa). Cys81 functions as the Nucleophile in the catalytic mechanism. Catalysis depends on residues His176 and Glu178. The GMPS ATP-PPase domain occupies 203–395; it reads WIMKNHIEEA…LGLPPEMVYR (193 aa). 230–236 serves as a coordination point for ATP; the sequence is SGGVDSS.

Homodimer.

It catalyses the reaction XMP + L-glutamine + ATP + H2O = GMP + L-glutamate + AMP + diphosphate + 2 H(+). It functions in the pathway purine metabolism; GMP biosynthesis; GMP from XMP (L-Gln route): step 1/1. Catalyzes the synthesis of GMP from XMP. This Burkholderia vietnamiensis (strain G4 / LMG 22486) (Burkholderia cepacia (strain R1808)) protein is GMP synthase [glutamine-hydrolyzing].